A 172-amino-acid polypeptide reads, in one-letter code: Disulfide bond formation protein B (172 aa).

Topologically, residues 1–11 are cytoplasmic; that stretch reads MNPFRWSFRAQ. A helical transmembrane segment spans residues 12–28; sequence FLLGFLACAGLLAYAIY. Residues 29–46 are Periplasmic-facing; the sequence is VQLHLGLEPCPLCIFQRI. An intrachain disulfide couples Cys38 to Cys41. The chain crosses the membrane as a helical span at residues 47–63; sequence AFAALAVFFLIGALHGP. Residues 64 to 70 are Cytoplasmic-facing; that stretch reads RAAGARK. The helical transmembrane segment at 71–88 threads the bilayer; it reads VYGVLSFIAAGVGMGIGA. The Periplasmic segment spans residues 89–145; the sequence is RHVWVQIRPKDMMSSCGPPLSFLSETMGPFEVFRTVLTGTGDCGNIDWRFLGLSMPM. A disulfide bridge links Cys104 with Cys131. A helical transmembrane segment spans residues 146-164; it reads WSMVWFVGLALWALSAGFK. The Cytoplasmic portion of the chain corresponds to 165-172; it reads ARRSSLHH.

This sequence belongs to the DsbB family.

It is found in the cell inner membrane. Functionally, required for disulfide bond formation in some periplasmic proteins. Acts by oxidizing the DsbA protein. The protein is Disulfide bond formation protein B of Xanthomonas oryzae pv. oryzae (strain MAFF 311018).